Consider the following 204-residue polypeptide: CASP-like protein 4B4 (204 aa).

The Cytoplasmic portion of the chain corresponds to 1-60; that stretch reads MSAAVAASSGAPAADVEKGAAAADANVDGGGAPAAAAASGEGVVSAVVRRWRRQDLLEKS. A helical transmembrane segment spans residues 61–81; that stretch reads GSALRVAAWAFSLLAFVVMGA. The Extracellular segment spans residues 82–98; that stretch reads NDHGDWRQFEHYEEYRY. A helical membrane pass occupies residues 99 to 119; it reads VVAIGVLAFIYTTLQLVRHGV. Topologically, residues 120-130 are cytoplasmic; that stretch reads RLTGGQDLQGK. Residues 131–151 traverse the membrane as a helical segment; that stretch reads VAVLVDFAGDQVTAYLLMSAV. Over 152–175 the chain is Extracellular; that stretch reads SAAIPITNRMREGADNVFTDSSAA. The helical transmembrane segment at 176-196 threads the bilayer; sequence SISMAFFAFLCLALSALVSGF. Residues 197–204 lie on the Cytoplasmic side of the membrane; sequence KLAKQTYI.

Belongs to the Casparian strip membrane proteins (CASP) family. As to quaternary structure, homodimer and heterodimers.

It is found in the cell membrane. The sequence is that of CASP-like protein 4B4 from Oryza sativa subsp. japonica (Rice).